The following is a 312-amino-acid chain: MKVAVLGAAGGIGQALALLLKTQLPSGSELSLYDIAPVTPGVAVDLSHIPTDVKIKGFSGEDAKPALEGADVVLISAGVARKPGMDRSDLFNVNAGIVKNLIQQVATTCPKACIGIITNPVNTTVAIAAEVLKKAGVYDKNKLFGVTTLDIIRSNTFVAELKGKKPAELDVPVIGGHSGVTILPLLSQIPGVNFTDQEVADLTKRIQNAGTEVVEAKAGGGSATLSMGQAAARFGLSLVRALQGEQGVVECAYVEGDGEYARFFSQPLLLGKNGIEERKPIGTLSAYEQQALEGMLDTLKKDIALGEEFVNK.

Residues 7 to 13 and D34 each bind NAD(+); that span reads GAAGGIG. Residues R81 and R87 each coordinate substrate. Residues N94 and 117–119 contribute to the NAD(+) site; that span reads ITN. N119 and R153 together coordinate substrate. The active-site Proton acceptor is H177. M227 lines the NAD(+) pocket.

The protein belongs to the LDH/MDH superfamily. MDH type 1 family. As to quaternary structure, homodimer.

The enzyme catalyses (S)-malate + NAD(+) = oxaloacetate + NADH + H(+). Functionally, catalyzes the reversible oxidation of malate to oxaloacetate. The chain is Malate dehydrogenase from Cronobacter sakazakii (strain ATCC BAA-894) (Enterobacter sakazakii).